Consider the following 120-residue polypeptide: Large ribosomal subunit protein uL24 (120 aa).

The interval 1–26 (MVRVISSQPRKQRKARYNAPHHMRGS) is disordered. Positions 10–24 (RKQRKARYNAPHHMR) are enriched in basic residues.

It belongs to the universal ribosomal protein uL24 family. As to quaternary structure, part of the 50S ribosomal subunit.

In terms of biological role, one of two assembly initiator proteins, it binds directly to the 5'-end of the 23S rRNA, where it nucleates assembly of the 50S subunit. Functionally, located at the polypeptide exit tunnel on the outside of the subunit. The chain is Large ribosomal subunit protein uL24 from Methanospirillum hungatei JF-1 (strain ATCC 27890 / DSM 864 / NBRC 100397 / JF-1).